The sequence spans 456 residues: Enolase (456 aa).

Position 164 (Q164) interacts with (2R)-2-phosphoglycerate. E207 acts as the Proton donor in catalysis. Residues D244, E287, and D314 each coordinate Mg(2+). Residues K339, R368, S369, and K390 each coordinate (2R)-2-phosphoglycerate. K339 serves as the catalytic Proton acceptor.

Belongs to the enolase family. In terms of assembly, component of the RNA degradosome, a multiprotein complex involved in RNA processing and mRNA degradation. It depends on Mg(2+) as a cofactor.

The protein localises to the cytoplasm. The protein resides in the secreted. It is found in the cell surface. The catalysed reaction is (2R)-2-phosphoglycerate = phosphoenolpyruvate + H2O. The protein operates within carbohydrate degradation; glycolysis; pyruvate from D-glyceraldehyde 3-phosphate: step 4/5. Its function is as follows. Catalyzes the reversible conversion of 2-phosphoglycerate (2-PG) into phosphoenolpyruvate (PEP). It is essential for the degradation of carbohydrates via glycolysis. The polypeptide is Enolase (Francisella tularensis subsp. tularensis (strain FSC 198)).